Here is a 1052-residue protein sequence, read N- to C-terminus: Carboxylic acid reductase (1052 aa).

The adenylation (A) domain stretch occupies residues 21-344 (RALNEPNREW…ATEFTPFPFY (324 aa)). AMP is bound by residues 334-335 (SA), threonine 339, and 419-422 (YQGR). Residues 560-643 (SSSDALIVSI…RLADYLLSIV (84 aa)) form the Carrier domain. O-(pantetheine 4'-phosphoryl)serine is present on serine 595. The interval 684–979 (GQVVVITGTT…QKIVPLDEWL (296 aa)) is carboxylic acid reductase (R) domain. NADP(+) contacts are provided by residues 693–696 (TGGI), arginine 718, 774–776 (NQW), serine 814, tyrosine 844, and lysine 848.

It belongs to the adenylate-forming reductase family. The cofactor is Mg(2+).

It catalyses the reaction an aromatic aldehyde + AMP + diphosphate + NADP(+) = an aromatic carboxylate + ATP + NADPH + H(+). The enzyme catalyses a carboxylate + ATP + NADPH + H(+) = an aldehyde + AMP + diphosphate + NADP(+). It carries out the reaction benzoate + ATP + NADPH + H(+) = benzaldehyde + AMP + diphosphate + NADP(+). The catalysed reaction is (E)-cinnamate + ATP + NADPH + H(+) = (E)-cinnamaldehyde + AMP + diphosphate + NADP(+). It catalyses the reaction piperonylate + ATP + NADPH + H(+) = piperonal + AMP + diphosphate + NADP(+). The enzyme catalyses salicylate + ATP + NADPH + H(+) = salicylaldehyde + AMP + diphosphate + NADP(+). It carries out the reaction 3-hydroxybenzoate + ATP + NADPH + H(+) = 3-hydroxybenzaldehyde + AMP + diphosphate + NADP(+). The catalysed reaction is 2-methoxybenzoate + ATP + NADPH + H(+) = 2-methoxybenzaldehyde + AMP + diphosphate + NADP(+). It catalyses the reaction 3-methoxybenzoate + ATP + NADPH + H(+) = 3-methoxybenzaldehyde + AMP + diphosphate + NADP(+). The enzyme catalyses 4-hydroxybenzoate + ATP + NADPH + H(+) = 4-hydroxybenzaldehyde + AMP + diphosphate + NADP(+). It carries out the reaction 4-methoxybenzoate + ATP + NADPH + H(+) = 4-methoxybenzaldehyde + AMP + diphosphate + NADP(+). The catalysed reaction is 3-phenylpropanoate + ATP + NADPH + H(+) = 3-phenylpropanal + AMP + diphosphate + NADP(+). It catalyses the reaction picolinate + ATP + NADPH + H(+) = picolinal + AMP + diphosphate + NADP(+). The enzyme catalyses propanoate + ATP + NADPH + H(+) = propanal + AMP + diphosphate + NADP(+). It carries out the reaction butanoate + ATP + NADPH + H(+) = butanal + AMP + diphosphate + NADP(+). The catalysed reaction is pentanoate + ATP + NADPH + H(+) = pentanal + AMP + diphosphate + NADP(+). It catalyses the reaction hexanoate + ATP + NADPH + H(+) = hexanal + AMP + diphosphate + NADP(+). The enzyme catalyses heptanoate + ATP + NADPH + H(+) = heptanal + AMP + diphosphate + NADP(+). It carries out the reaction octanoate + ATP + NADPH + H(+) = octanal + AMP + diphosphate + NADP(+). The catalysed reaction is nonanoate + ATP + NADPH + H(+) = nonanal + AMP + diphosphate + NADP(+). Carboxylic acid reductase that shows a broad range of substrate specificity towards aromatic acids, especially to phenyl carboxylic and phenyl acrylic acids, to convert them into their respective aldehydes. Also able to use aliphatic acids as substrates. This is Carboxylic acid reductase from Neurospora crassa (strain ATCC 24698 / 74-OR23-1A / CBS 708.71 / DSM 1257 / FGSC 987).